The chain runs to 123 residues: Alpha-lactalbumin B/C (123 aa).

A C-type lysozyme domain is found at 1 to 123 (KQFTKCQLSQ…KLEQWLCEEL (123 aa)). 4 disulfides stabilise this stretch: Cys6–Cys120, Cys28–Cys111, Cys61–Cys77, and Cys73–Cys91. 5 residues coordinate Ca(2+): Lys79, Asp82, Asp84, Asp87, and Asp88.

The protein belongs to the glycosyl hydrolase 22 family. Lactose synthase (LS) is a heterodimer of a catalytic component, beta1,4-galactosyltransferase (beta4Gal-T1) and a regulatory component, alpha-lactalbumin (LA). As to expression, mammary gland specific. Secreted in milk.

It localises to the secreted. In terms of biological role, regulatory subunit of lactose synthase, changes the substrate specificity of galactosyltransferase in the mammary gland making glucose a good acceptor substrate for this enzyme. This enables LS to synthesize lactose, the major carbohydrate component of milk. In other tissues, galactosyltransferase transfers galactose onto the N-acetylglucosamine of the oligosaccharide chains in glycoproteins. This Equus caballus (Horse) protein is Alpha-lactalbumin B/C.